The sequence spans 164 residues: Vesiculogenesis and immune response regulator (164 aa).

Could be O-mannosylated. Is likely mannosylated on Thr-61 when overexpressed in M.smegmatis.

It is found in the cell inner membrane. Its subcellular location is the cytoplasm. Virulence factor that regulates vesiculogenesis. Acts by regulating the production of mycobacterial membrane vesicles (MV) bearing Toll-like receptor 2 (TLR2) ligands, including the lipoproteins LpqH, a major host TLR2 agonist, and SodC. By restraining the release of most of the material that activates host cells through TLR2, VirR reduces the immunostimulant potential of M.tuberculosis and increases its virulence. May contribute to cell envelope integrity. Its function is as follows. When overexpressed in M.smegmatis, it modulates the production of IL-10, IL-12 p40 and TNF-alpha by RAW264.7 macrophages and it decreases the killing of M.smegmatis. This is Vesiculogenesis and immune response regulator from Mycobacterium tuberculosis (strain ATCC 25618 / H37Rv).